Reading from the N-terminus, the 195-residue chain is Peptidyl-tRNA hydrolase (195 aa).

Y17 is a binding site for tRNA. H22 acts as the Proton acceptor in catalysis. TRNA contacts are provided by F68, N70, and N116.

The protein belongs to the PTH family. In terms of assembly, monomer.

The protein resides in the cytoplasm. It catalyses the reaction an N-acyl-L-alpha-aminoacyl-tRNA + H2O = an N-acyl-L-amino acid + a tRNA + H(+). Hydrolyzes ribosome-free peptidyl-tRNAs (with 1 or more amino acids incorporated), which drop off the ribosome during protein synthesis, or as a result of ribosome stalling. Its function is as follows. Catalyzes the release of premature peptidyl moieties from peptidyl-tRNA molecules trapped in stalled 50S ribosomal subunits, and thus maintains levels of free tRNAs and 50S ribosomes. This chain is Peptidyl-tRNA hydrolase, found in Pectobacterium carotovorum subsp. carotovorum (strain PC1).